The primary structure comprises 205 residues: Probable NAD(P)H dehydrogenase (quinone) FQR1-like 1 (205 aa).

The 188-residue stretch at valine 5–isoleucine 192 folds into the Flavodoxin-like domain. FMN contacts are provided by residues serine 11 to histidine 15, isoleucine 112 to glycine 165, and histidine 136. An NAD(+)-binding site is contributed by tyrosine 13.

It belongs to the WrbA family. It depends on FMN as a cofactor.

The protein resides in the cell membrane. The catalysed reaction is a quinone + NADH + H(+) = a quinol + NAD(+). The enzyme catalyses a quinone + NADPH + H(+) = a quinol + NADP(+). Catalyzes the transfer of electrons from NADH and NADPH to reduce quinone to the hydroquinone state. This Arabidopsis thaliana (Mouse-ear cress) protein is Probable NAD(P)H dehydrogenase (quinone) FQR1-like 1.